The primary structure comprises 424 residues: Enolase (424 aa).

Gln162 serves as a coordination point for (2R)-2-phosphoglycerate. Glu204 functions as the Proton donor in the catalytic mechanism. Mg(2+) contacts are provided by Asp241, Glu284, and Asp311. (2R)-2-phosphoglycerate-binding residues include Lys336, Arg365, Ser366, and Lys387. Residue Lys336 is the Proton acceptor of the active site.

It belongs to the enolase family. Mg(2+) serves as cofactor.

The protein resides in the cytoplasm. Its subcellular location is the secreted. It localises to the cell surface. The enzyme catalyses (2R)-2-phosphoglycerate = phosphoenolpyruvate + H2O. It participates in carbohydrate degradation; glycolysis; pyruvate from D-glyceraldehyde 3-phosphate: step 4/5. Catalyzes the reversible conversion of 2-phosphoglycerate (2-PG) into phosphoenolpyruvate (PEP). It is essential for the degradation of carbohydrates via glycolysis. The polypeptide is Enolase (Mesorhizobium japonicum (strain LMG 29417 / CECT 9101 / MAFF 303099) (Mesorhizobium loti (strain MAFF 303099))).